A 380-amino-acid polypeptide reads, in one-letter code: L-lactate dehydrogenase (380 aa).

Residues 1 to 380 (MIISASTDYR…SADSLVQGLR (380 aa)) enclose the FMN hydroxy acid dehydrogenase domain. Residue Y24 coordinates substrate. Residues S106 and Q127 each coordinate FMN. Y129 is a binding site for substrate. Residue T155 participates in FMN binding. Residue R164 participates in substrate binding. Residue K251 participates in FMN binding. The active-site Proton acceptor is the H275. Substrate is bound at residue R278. 306–330 (DSGIRSGLDVVRMIALGADGVLLGR) lines the FMN pocket.

The protein belongs to the FMN-dependent alpha-hydroxy acid dehydrogenase family. FMN is required as a cofactor.

Its subcellular location is the cell inner membrane. The enzyme catalyses (S)-lactate + A = pyruvate + AH2. In terms of biological role, catalyzes the conversion of L-lactate to pyruvate. Is coupled to the respiratory chain. The sequence is that of L-lactate dehydrogenase from Serratia proteamaculans (strain 568).